The primary structure comprises 274 residues: Copper chaperone for superoxide dismutase (274 aa).

Positions 11-74 (VCALEFAVQM…LLESTGRQAV (64 aa)) constitute an HMA domain. Cu cation-binding residues include C22 and C25. A Glycyl lysine isopeptide (Lys-Gly) (interchain with G-Cter in ubiquitin) cross-link involves residue K76. The interval 88 to 234 (AAVAILEGCG…LACGIIARSA (147 aa)) is superoxide dismutase-like. A disulfide bridge connects residues C141 and C227. 4 residues coordinate Zn(2+): H147, H155, H164, and D167. Residues K189, K216, and K241 each participate in a glycyl lysine isopeptide (Lys-Gly) (interchain with G-Cter in ubiquitin) cross-link. 2 residues coordinate Cu cation: C244 and C246. At S267 the chain carries Phosphoserine.

It in the C-terminal section; belongs to the Cu-Zn superoxide dismutase family. Homodimer, and heterodimer with SOD1. Interacts with COMMD1. Interacts with XIAP/BIRC4. Interacts with SLC31A1(via C-terminal domain); this interaction is Cu(1+)-mediated. The heterodimer CCS:SOD1 interacts with SLC31A1; this heterotrimer is Cu(1+)-mediated and its maintenance is regulated through SOD1 activation. Cu(2+) serves as cofactor. Zn(2+) is required as a cofactor. Post-translationally, ubiquitinion by XIAP/BIRC4 leads to enhancement of its chaperone activity toward its physiologic target, SOD1, rather than proteasomal degradation. XIAP/BIRC4 preferentially ubiquitinates at Lys-241. In terms of tissue distribution, ubiquitous.

The protein localises to the cytoplasm. Functionally, delivers copper to copper zinc superoxide dismutase (SOD1). The protein is Copper chaperone for superoxide dismutase of Mus musculus (Mouse).